The primary structure comprises 3301 residues: Cadherin EGF LAG seven-pass G-type receptor 3 (3301 aa).

Residues 1–31 (MARRPLWWGLPGPSTPVLLLLLLSLFPFSRE) form the signal peptide. Residues 32–2531 (ELGGGGDQDW…RLEGDLELLA (2500 aa)) are Extracellular-facing. 2 disordered regions span residues 148–189 (LPLD…ARRS) and 202–314 (KLWE…NRHP). The segment covering 267 to 276 (MRSRGLFRRR) has biased composition (basic residues). Cadherin domains are found at residues 317–424 (PQYN…APVF), 425–536 (EQAQ…APQF), 537–642 (SEKR…APIF), 643–747 (VSTP…RPEF), 748–849 (TMKE…RPVF), 850–952 (QSAH…APQF), 953–1058 (VASH…APVF), 1059–1160 (PAEE…SPVL), and 1161–1257 (NNFQ…VVII). N623 carries an N-linked (GlcNAc...) asparagine glycan. N838 is a glycosylation site (N-linked (GlcNAc...) asparagine). N-linked (GlcNAc...) asparagine glycosylation is found at N1173, N1213, N1308, and N1318. Residues 1366 to 1424 (DDNVCLREPCENYMKCVSVLRFDSSAPFLASTSTLFRPIQPIAGLRCRCPPGFTGDFCE) enclose the EGF-like 1; calcium-binding domain. Disulfide bonds link C1370–C1381, C1375–C1412, C1414–C1423, C1430–C1441, C1435–C1450, C1452–C1459, C1468–C1479, C1473–C1489, and C1491–C1502. Residues 1426–1460 (ELDLCYSNPCRNGGACARREGGYTCVCRPRFTDCE) form the EGF-like 2; calcium-binding domain. In terms of domain architecture, EGF-like 3; calcium-binding spans 1464-1503 (EAGRCVPGVCRNGGTCTNAPNGGFRCQCPAGGAFEGPRCE). The Laminin G-like 1 domain occupies 1504–1708 (VAARSFPPSS…VANNGTMAGC (205 aa)). N-linked (GlcNAc...) asparagine glycosylation is found at N1638 and N1702. 4 cysteine pairs are disulfide-bonded: C1682/C1708, C1715/C1726, C1720/C1735, and C1737/C1746. Residues 1711 to 1747 (KSHFCASGPCKNNGFCSERWGGFSCDCPVGFGGKDCR) enclose the EGF-like 4; calcium-binding domain. The region spanning 1751–1933 (AHPYHFQGNG…SHRVNVEPGC (183 aa)) is the Laminin G-like 2 domain. Residue N1759 is glycosylated (N-linked (GlcNAc...) asparagine). 9 disulfide bridges follow: C1904/C1933, C1939/C1950, C1944/C1959, C1961/C1970, C1974/C1985, C1979/C1997, C1999/C2008, C2016/C2029, and C2031/C2041. The EGF-like 5; calcium-binding domain occupies 1935-1971 (VTNPCASGPCPPHADCKDLWQTFSCTCRPGYYGPGCV). D1952 carries the post-translational modification (3R)-3-hydroxyaspartate. The EGF-like 6; calcium-binding domain occupies 1972-2002 (DACLLNPCQNQGSCRHLQGAPHGYTCDCVSG). An EGF-like 7; calcium-binding domain is found at 2003-2042 (YFGQHCEHRVDQQCPRGWWGSPTCGPCNCDVHKGFDPNCN). Residue N2042 is glycosylated (N-linked (GlcNAc...) asparagine). In terms of domain architecture, EGF-like 8; calcium-binding spans 2044–2079 (TNGQCHCKEFHYRPRGSDSCLPCDCYPVGSTSRSCA). 5 disulfides stabilise this stretch: C2048-C2063, C2050-C2066, C2068-C2078, C2087-C2096, and C2099-C2111. The Laminin EGF-like domain maps to 2066–2113 (CDCYPVGSTSRSCAPHSGQCPCRPGALGRQCNSCDSPFAEVTASGCRV). Y2115 carries the phosphotyrosine modification. 5 N-linked (GlcNAc...) asparagine glycosylation sites follow: N2166, N2185, N2375, N2465, and N2497. A disordered region spans residues 2353–2388 (LLPSQASQPSPSEVLPTSSNAENATASSVVSPPAPL). The segment covering 2355-2383 (PSQASQPSPSEVLPTSSNAENATASSVVS) has biased composition (low complexity). Positions 2357–2521 (QASQPSPSEV…GVLMDASPRE (165 aa)) constitute a GAIN-B domain. 2 disulfides stabilise this stretch: C2471-C2503 and C2491-C2505. The GPS stretch occupies residues 2471–2521 (CVQWDPPGPTDQHGMWTARDCELVHRNGSHARCRCSRTGTFGVLMDASPRE). Residues 2532-2552 (VFTHVVVAVSVTALVLTAAVL) form a helical membrane-spanning segment. The Cytoplasmic portion of the chain corresponds to 2553–2563 (LSLRSLKSNVR). Residues 2564–2584 (GIHANVAAALGVAELLFLLGI) traverse the membrane as a helical segment. Residues 2585–2592 (HRTHNQLL) lie on the Extracellular side of the membrane. Residues 2593–2613 (CTAVAILLHYFFLSTFAWLLV) traverse the membrane as a helical segment. Residues 2614–2634 (QGLHLYRMQVEPRNVDRGAMR) are Cytoplasmic-facing. The chain crosses the membrane as a helical span at residues 2635–2655 (FYHALGWGVPAVLLGLAVGLD). Topologically, residues 2656-2673 (PEGYGNPDFCWISIHEPL) are extracellular. Residues 2674–2694 (IWSFAGPIVLVIVMNGTMFLL) form a helical membrane-spanning segment. The Cytoplasmic segment spans residues 2695-2716 (AARTSCSTGQREAKKTSVLTLR). A helical transmembrane segment spans residues 2717–2737 (SSFLLLLLVSASWLFGLLAVN). Topologically, residues 2738–2744 (HSILAFH) are extracellular. A helical membrane pass occupies residues 2745–2765 (YLHAGLCGLQGLAVLLLFCVL). The Cytoplasmic portion of the chain corresponds to 2766–3301 (NADARAAWTP…SEVPRSEGHS (536 aa)). Disordered regions lie at residues 2823 to 2844 (SSAR…YLRD), 2879 to 2919 (AGAD…RPLR), and 2969 to 2992 (SNKD…TSLG). The segment covering 2881-2891 (ADSDSDSDLSL) has biased composition (acidic residues). Basic residues predominate over residues 2910–2919 (TRGRFQRPLR). Y3042 bears the Phosphotyrosine mark. Residues 3083-3301 (APVLHPLSRP…SEVPRSEGHS (219 aa)) are disordered. At S3090 the chain carries Phosphoserine. Over residues 3094 to 3111 (SQERLDTAPARLEARDRG) the composition is skewed to basic and acidic residues. Composition is skewed to low complexity over residues 3168-3189 (SPQR…SLSR) and 3239-3261 (LSSI…STPS). A compositionally biased stretch (polar residues) spans 3276–3289 (TPRSATSHSISELS).

It belongs to the G-protein coupled receptor 2 family. LN-TM7 subfamily. Expressed in the CNS and in the eye.

The protein localises to the cell membrane. Its function is as follows. Receptor that may have an important role in cell/cell signaling during nervous system formation. This Mus musculus (Mouse) protein is Cadherin EGF LAG seven-pass G-type receptor 3 (Celsr3).